The following is a 268-amino-acid chain: Interleukin-1 alpha (268 aa).

A propeptide spanning residues 1 to 112 is cleaved from the precursor; that stretch reads MAKVPDLFED…DTEEEIIKPR (112 aa). Lys82 bears the N6-acetyllysine mark. Residues 82 to 86 are nuclear localization signal (NLS); sequence KKRRL. Ser87 is subject to Phosphoserine. N-linked (GlcNAc...) asparagine glycans are attached at residues Asn102 and Asn141.

This sequence belongs to the IL-1 family. Monomer. Interacts with TMED10; the interaction mediates the translocation from the cytoplasm into the ERGIC (endoplasmic reticulum-Golgi intermediate compartment) and thereby secretion. Interacts with IL1R1. Interacts with S100A13; this interaction is the first step in the export of IL1A, followed by direct translocation of this complex across the plasma membrane. Post-translationally, acetylated within its nuclear localization sequence, which impacts subcellular localization. Proteolytic processed by CAPN1 in a calcium-dependent manner. Cleavage from 31 kDa precursor to 18 kDa biologically active molecules. In terms of processing, phosphorylated. Phosphorylation greatly enhances susceptibility to digestion and promotes the conversion of pre-IL1A alpha to the biologically active IL1A.

It is found in the nucleus. The protein resides in the cytoplasm. It localises to the secreted. Functionally, cytokine constitutively present intracellularly in nearly all resting non-hematopoietic cells that plays an important role in inflammation and bridges the innate and adaptive immune systems. After binding to its receptor IL1R1 together with its accessory protein IL1RAP, forms the high affinity interleukin-1 receptor complex. Signaling involves the recruitment of adapter molecules such as MYD88, IRAK1 or IRAK4. In turn, mediates the activation of NF-kappa-B and the three MAPK pathways p38, p42/p44 and JNK pathways. Within the cell, acts as an alarmin and cell death results in its liberation in the extracellular space after disruption of the cell membrane to induce inflammation and alert the host to injury or damage. In addition to its role as a danger signal, which occurs when the cytokine is passively released by cell necrosis, directly senses DNA damage and acts as signal for genotoxic stress without loss of cell integrity. In Lama glama (Llama), this protein is Interleukin-1 alpha (IL1A).